Consider the following 193-residue polypeptide: Phosphoheptose isomerase (193 aa).

Positions 37 to 193 (LAASFKADGK…QLIEKEMASV (157 aa)) constitute an SIS domain. 52-54 (NGG) is a substrate binding site. Positions 61 and 65 each coordinate Zn(2+). Substrate is bound by residues E65, 93–94 (ND), 119–121 (STS), S124, and Q172. The Zn(2+) site is built by Q172 and H180.

It belongs to the SIS family. GmhA subfamily. As to quaternary structure, homotetramer. Zn(2+) serves as cofactor.

Its subcellular location is the cytoplasm. The catalysed reaction is 2 D-sedoheptulose 7-phosphate = D-glycero-alpha-D-manno-heptose 7-phosphate + D-glycero-beta-D-manno-heptose 7-phosphate. It functions in the pathway carbohydrate biosynthesis; D-glycero-D-manno-heptose 7-phosphate biosynthesis; D-glycero-alpha-D-manno-heptose 7-phosphate and D-glycero-beta-D-manno-heptose 7-phosphate from sedoheptulose 7-phosphate: step 1/1. Functionally, catalyzes the isomerization of sedoheptulose 7-phosphate in D-glycero-D-manno-heptose 7-phosphate. The chain is Phosphoheptose isomerase from Edwardsiella ictaluri (strain 93-146).